The following is a 280-amino-acid chain: Energy-coupling factor transporter ATP-binding protein EcfA1 (280 aa).

Residues 6 to 241 (IELKNVTFRY…GDELLDLGLD (236 aa)) form the ABC transporter domain. 41–48 (GHNGSGKS) contacts ATP.

The protein belongs to the ABC transporter superfamily. Energy-coupling factor EcfA family. As to quaternary structure, forms a stable energy-coupling factor (ECF) transporter complex composed of 2 membrane-embedded substrate-binding proteins (S component), 2 ATP-binding proteins (A component) and 2 transmembrane proteins (T component).

It is found in the cell membrane. Functionally, ATP-binding (A) component of a common energy-coupling factor (ECF) ABC-transporter complex. Unlike classic ABC transporters this ECF transporter provides the energy necessary to transport a number of different substrates. The protein is Energy-coupling factor transporter ATP-binding protein EcfA1 of Streptococcus mutans serotype c (strain ATCC 700610 / UA159).